The primary structure comprises 159 residues: 2-C-methyl-D-erythritol 2,4-cyclodiphosphate synthase (159 aa).

2 residues coordinate a divalent metal cation: aspartate 10 and histidine 12. 4-CDP-2-C-methyl-D-erythritol 2-phosphate is bound by residues 10-12 and 37-38; these read DVH and HS. A divalent metal cation is bound at residue histidine 45. 4-CDP-2-C-methyl-D-erythritol 2-phosphate-binding positions include 59–61, 64–68, 103–109, 135–138, phenylalanine 142, and arginine 145; these read DIG, FPDTD, AQAPKML, and TTTE.

It belongs to the IspF family. In terms of assembly, homotrimer. A divalent metal cation serves as cofactor.

It carries out the reaction 4-CDP-2-C-methyl-D-erythritol 2-phosphate = 2-C-methyl-D-erythritol 2,4-cyclic diphosphate + CMP. Its pathway is isoprenoid biosynthesis; isopentenyl diphosphate biosynthesis via DXP pathway; isopentenyl diphosphate from 1-deoxy-D-xylulose 5-phosphate: step 4/6. In terms of biological role, involved in the biosynthesis of isopentenyl diphosphate (IPP) and dimethylallyl diphosphate (DMAPP), two major building blocks of isoprenoid compounds. Catalyzes the conversion of 4-diphosphocytidyl-2-C-methyl-D-erythritol 2-phosphate (CDP-ME2P) to 2-C-methyl-D-erythritol 2,4-cyclodiphosphate (ME-CPP) with a corresponding release of cytidine 5-monophosphate (CMP). This is 2-C-methyl-D-erythritol 2,4-cyclodiphosphate synthase from Francisella tularensis subsp. novicida (strain U112).